A 201-amino-acid polypeptide reads, in one-letter code: Recombination protein RecR (201 aa).

Residues Cys60–Cys75 form a C4-type zinc finger. Residues Thr83–Pro178 form the Toprim domain.

It belongs to the RecR family.

In terms of biological role, may play a role in DNA repair. It seems to be involved in an RecBC-independent recombinational process of DNA repair. It may act with RecF and RecO. The polypeptide is Recombination protein RecR (Methylorubrum extorquens (strain CM4 / NCIMB 13688) (Methylobacterium extorquens)).